A 134-amino-acid polypeptide reads, in one-letter code: Small ribosomal subunit protein uS11 (134 aa).

This sequence belongs to the universal ribosomal protein uS11 family. In terms of assembly, part of the 30S ribosomal subunit. Interacts with proteins S7 and S18. Binds to IF-3.

In terms of biological role, located on the platform of the 30S subunit, it bridges several disparate RNA helices of the 16S rRNA. Forms part of the Shine-Dalgarno cleft in the 70S ribosome. In Paraburkholderia xenovorans (strain LB400), this protein is Small ribosomal subunit protein uS11.